We begin with the raw amino-acid sequence, 281 residues long: MLRVAVPNKGALSESASEILSEAGYRRRSDPKDLTVVDPANNVEFFFLRPKDIAIYVGSGELDLGITGRDLAADADAPVRERLALGFGSSTFRYAAPAGQDWQIADLAGRRIATAYPNLVRKDLADKGIDATVIRLDGAVEISIQLGVADVIADIVGSGRTLGLHNLVAFGESLCDSEAILIERADSDPDPARDQLAARVQGVVFGQQYLMLDYDCPRTVLDKATEVTPGLESPTIAPLADPAWVAVRALVPRRDVNAIMDELAAIGAKAILASDIRFCRF.

Belongs to the ATP phosphoribosyltransferase family. Long subfamily. As to quaternary structure, equilibrium between an active dimeric form, an inactive hexameric form and higher aggregates. Interconversion between the various forms is largely reversible and is influenced by the natural substrates and inhibitors of the enzyme. Mg(2+) serves as cofactor.

It localises to the cytoplasm. The catalysed reaction is 1-(5-phospho-beta-D-ribosyl)-ATP + diphosphate = 5-phospho-alpha-D-ribose 1-diphosphate + ATP. The protein operates within amino-acid biosynthesis; L-histidine biosynthesis; L-histidine from 5-phospho-alpha-D-ribose 1-diphosphate: step 1/9. Feedback inhibited by histidine. Its function is as follows. Catalyzes the condensation of ATP and 5-phosphoribose 1-diphosphate to form N'-(5'-phosphoribosyl)-ATP (PR-ATP). Has a crucial role in the pathway because the rate of histidine biosynthesis seems to be controlled primarily by regulation of HisG enzymatic activity. The protein is ATP phosphoribosyltransferase of Mycolicibacterium gilvum (strain PYR-GCK) (Mycobacterium gilvum (strain PYR-GCK)).